A 138-amino-acid chain; its full sequence is MLQPKRRKYRKEQKGRNTGIATRGNAVSFGEFGLKAMGRGRLTARQIESARRAMTRHIKRGGRIWIRIFPDKPISKKPAEVRMGNGKGNPEYYVAEIQPGKMLYEMDGVGEELAREAFRLAAAKLPIATSFVVRQVGT.

Over residues 1 to 13 (MLQPKRRKYRKEQ) the composition is skewed to basic residues. The disordered stretch occupies residues 1–20 (MLQPKRRKYRKEQKGRNTGI).

This sequence belongs to the universal ribosomal protein uL16 family. In terms of assembly, part of the 50S ribosomal subunit.

Binds 23S rRNA and is also seen to make contacts with the A and possibly P site tRNAs. In Ralstonia nicotianae (strain ATCC BAA-1114 / GMI1000) (Ralstonia solanacearum), this protein is Large ribosomal subunit protein uL16.